Consider the following 27-residue polypeptide: 23S rRNA methylase leader peptide (27 aa).

Its function is as follows. This peptide is involved in the control mechanism of the synthesis of the erythromycin resistance protein. The polypeptide is 23S rRNA methylase leader peptide (ermC) (Enterococcus faecalis (Streptococcus faecalis)).